Consider the following 360-residue polypeptide: Peptide chain release factor 1 (360 aa).

Residue Gln235 is modified to N5-methylglutamine.

Belongs to the prokaryotic/mitochondrial release factor family. Post-translationally, methylated by PrmC. Methylation increases the termination efficiency of RF1.

The protein localises to the cytoplasm. Functionally, peptide chain release factor 1 directs the termination of translation in response to the peptide chain termination codons UAG and UAA. This chain is Peptide chain release factor 1, found in Burkholderia multivorans (strain ATCC 17616 / 249).